The sequence spans 325 residues: GTP 3',8-cyclase (325 aa).

One can recognise a Radical SAM core domain in the interval 4-219 (TYQREINYLR…DAISAKLGPL (216 aa)). Arg13 contributes to the GTP binding site. Positions 20 and 24 each coordinate [4Fe-4S] cluster. An S-adenosyl-L-methionine-binding site is contributed by Tyr26. Cys27 lines the [4Fe-4S] cluster pocket. GTP is bound at residue Arg63. Position 67 (Gly67) interacts with S-adenosyl-L-methionine. Position 94 (Thr94) interacts with GTP. Ser118 is an S-adenosyl-L-methionine binding site. A GTP-binding site is contributed by Lys155. Position 189 (Met189) interacts with S-adenosyl-L-methionine. Residues Cys254 and Cys257 each contribute to the [4Fe-4S] cluster site. Position 259 to 261 (259 to 261 (RLR)) interacts with GTP. Cys271 contributes to the [4Fe-4S] cluster binding site.

Belongs to the radical SAM superfamily. MoaA family. Monomer and homodimer. It depends on [4Fe-4S] cluster as a cofactor.

It carries out the reaction GTP + AH2 + S-adenosyl-L-methionine = (8S)-3',8-cyclo-7,8-dihydroguanosine 5'-triphosphate + 5'-deoxyadenosine + L-methionine + A + H(+). The protein operates within cofactor biosynthesis; molybdopterin biosynthesis. In terms of biological role, catalyzes the cyclization of GTP to (8S)-3',8-cyclo-7,8-dihydroguanosine 5'-triphosphate. In Pelotomaculum thermopropionicum (strain DSM 13744 / JCM 10971 / SI), this protein is GTP 3',8-cyclase.